A 250-amino-acid polypeptide reads, in one-letter code: Manganese transport system ATP-binding protein MntB (250 aa).

The ABC transporter domain occupies 5 to 236 (VKVDNLSVFY…MVAKTYQGNL (232 aa)). Residue 37–44 (GPNGAGKS) coordinates ATP.

It belongs to the ABC transporter superfamily.

The protein localises to the cell membrane. Its function is as follows. This protein is probably a component of a manganese permease, a binding protein-dependent, ATP-driven transport system. Probably responsible for energy coupling to the transport system. The polypeptide is Manganese transport system ATP-binding protein MntB (mntB) (Halalkalibacterium halodurans (strain ATCC BAA-125 / DSM 18197 / FERM 7344 / JCM 9153 / C-125) (Bacillus halodurans)).